We begin with the raw amino-acid sequence, 263 residues long: Acyl-[acyl-carrier-protein]--UDP-N-acetylglucosamine O-acyltransferase (263 aa).

It belongs to the transferase hexapeptide repeat family. LpxA subfamily. As to quaternary structure, homotrimer.

Its subcellular location is the cytoplasm. It catalyses the reaction a (3R)-hydroxyacyl-[ACP] + UDP-N-acetyl-alpha-D-glucosamine = a UDP-3-O-[(3R)-3-hydroxyacyl]-N-acetyl-alpha-D-glucosamine + holo-[ACP]. Its pathway is glycolipid biosynthesis; lipid IV(A) biosynthesis; lipid IV(A) from (3R)-3-hydroxytetradecanoyl-[acyl-carrier-protein] and UDP-N-acetyl-alpha-D-glucosamine: step 1/6. Its function is as follows. Involved in the biosynthesis of lipid A, a phosphorylated glycolipid that anchors the lipopolysaccharide to the outer membrane of the cell. This chain is Acyl-[acyl-carrier-protein]--UDP-N-acetylglucosamine O-acyltransferase, found in Campylobacter jejuni subsp. doylei (strain ATCC BAA-1458 / RM4099 / 269.97).